A 352-amino-acid chain; its full sequence is Phosphate acyltransferase (352 aa).

It belongs to the PlsX family. In terms of assembly, homodimer. Probably interacts with PlsY.

It localises to the cytoplasm. It carries out the reaction a fatty acyl-[ACP] + phosphate = an acyl phosphate + holo-[ACP]. Its pathway is lipid metabolism; phospholipid metabolism. Its function is as follows. Catalyzes the reversible formation of acyl-phosphate (acyl-PO(4)) from acyl-[acyl-carrier-protein] (acyl-ACP). This enzyme utilizes acyl-ACP as fatty acyl donor, but not acyl-CoA. This is Phosphate acyltransferase from Bordetella bronchiseptica (strain ATCC BAA-588 / NCTC 13252 / RB50) (Alcaligenes bronchisepticus).